Here is a 59-residue protein sequence, read N- to C-terminus: Zinc finger protein HVO_2753 (59 aa).

Short sequence motifs (c(P)XCG motif) lie at residues 12–16 (CVSCG), 29–33 (CPDCG), 39–43 (CSKCR), and 51–55 (CPDCG). Residues Cys29 and Cys32 each contribute to the Zn(2+) site. 2 residues coordinate Zn(2+): Cys51 and Cys54.

As to quaternary structure, monomer in solution.

Functionally, zinc-binding protein that binds only one zinc ion. Is required for swarming and biofilm formation. This is Zinc finger protein HVO_2753 from Haloferax volcanii (strain ATCC 29605 / DSM 3757 / JCM 8879 / NBRC 14742 / NCIMB 2012 / VKM B-1768 / DS2) (Halobacterium volcanii).